The sequence spans 355 residues: Guanine nucleotide-binding protein G(i) subunit alpha-2 (355 aa).

Residue glycine 2 is the site of N-myristoyl glycine attachment. Cysteine 3 carries the S-palmitoyl cysteine lipid modification. In terms of domain architecture, G-alpha spans 32 to 355 (REVKLLLLGA…KNNLKDCGLF (324 aa)). The G1 motif stretch occupies residues 35-48 (KLLLLGAGESGKST). GTP-binding positions include 40 to 47 (GAGESGKS), 176 to 182 (LRTRVKT), 201 to 205 (DVGGQ), 270 to 273 (NKKD), and alanine 327. 2 residues coordinate Mg(2+): serine 47 and threonine 182. A G2 motif region spans residues 174-182 (DVLRTRVKT). Positions 197 to 206 (FKMFDVGGQR) are G3 motif. The segment at 266-273 (ILFLNKKD) is G4 motif. The G5 motif stretch occupies residues 325–330 (TCATDT).

The protein belongs to the G-alpha family. G(i/o/t/z) subfamily. G proteins are composed of 3 units; alpha, beta and gamma. The alpha chain contains the guanine nucleotide binding site. In this context, interacts with GNB2. Interacts with UNC5B. Interacts with GPSM1. Interacts with RGS12 and RGS14. Interacts (inactive GDP-bound form) with NUCB1 (via GBA motif); the interaction leads to activation of GNAI3. Interacts (inactive GDP-bound form) with CCDC88C/DAPLE (via GBA motif). Interacts (inactive GDP-bound form) with CCDC8A/GIV (via GBA motif). Interacts with CXCR1 and CXCR2.

The protein resides in the cytoplasm. It localises to the cytoskeleton. It is found in the microtubule organizing center. Its subcellular location is the centrosome. The protein localises to the cell membrane. The protein resides in the membrane. Its function is as follows. Guanine nucleotide-binding proteins (G proteins) are involved as modulators or transducers in various transmembrane signaling systems. The G(i) proteins are involved in hormonal regulation of adenylate cyclase: they inhibit the cyclase in response to beta-adrenergic stimuli. May play a role in cell division. This Canis lupus familiaris (Dog) protein is Guanine nucleotide-binding protein G(i) subunit alpha-2 (GNAI2).